Here is a 247-residue protein sequence, read N- to C-terminus: Probable transcriptional regulatory protein HRM2_04000 (247 aa).

This sequence belongs to the TACO1 family.

The protein localises to the cytoplasm. This is Probable transcriptional regulatory protein HRM2_04000 from Desulforapulum autotrophicum (strain ATCC 43914 / DSM 3382 / VKM B-1955 / HRM2) (Desulfobacterium autotrophicum).